The following is a 118-amino-acid chain: Ribosome-binding factor A (118 aa).

The protein belongs to the RbfA family. In terms of assembly, monomer. Binds 30S ribosomal subunits, but not 50S ribosomal subunits or 70S ribosomes.

It is found in the cytoplasm. Its function is as follows. One of several proteins that assist in the late maturation steps of the functional core of the 30S ribosomal subunit. Associates with free 30S ribosomal subunits (but not with 30S subunits that are part of 70S ribosomes or polysomes). Required for efficient processing of 16S rRNA. May interact with the 5'-terminal helix region of 16S rRNA. This is Ribosome-binding factor A from Bacillus cereus (strain AH820).